Here is a 769-residue protein sequence, read N- to C-terminus: MASISHSSLALGGASSASASDYLRSSSNGVNGVPLKTLGRAVFTTIRRKDLAVTSRLKKGKKFEHPWPANPDPNVKGGVLSYLAEFKPLGDTQKPVTLDFEKPLVELEKKIVDVRKMANETGLDFTEQIITLENKYRQALKDLYTHLTPIQRVNIARHPNRPTFLDHIHNITDKFMELHGDRAGYDDPAIVTGIGTIDGKRYMFIGHQKGRNTKENIMRNFGMPTPHGYRKALRMMYYADHHGFPIVTFIDTPGAYADLKSEELGQGEAIANNLRTMFGLKVPILSIVIGEGGSGGALAIGCANKMLMLENAVFYVASPEACAAILWKTSKAAPEAAEKLRITSKELVKLNVADGIIPEPLGGAHADPSWTSQQIKIAINENMNEFGKMSGEELLKHRMAKYRKIGVFIEGEPIEPSRKINMKKREAVFSDSRKLQGEVDKLKEQILKAKETSTEAEPSSEVLNEMIEKLKSEIDDEYTEAAIAVGLEERLTAMREEFSKASSEEHLMHPVLIEKIEKLKEEFNTRLTDAPNYESLKSKLNMLRDFSRAKAASEATSLKKEINKRFQEAVDRPEIREKVEAIKAEVASSGASSFDELPDALKEKVLKTKGEVEAEMAGVLKSMGLELDAVKQNQKDTAEQIYAANENLQEKLEKLNQEITSKIEEVVRTPEIKSMVELLKVETAKASKTPGVTEAYQKIEALEQQIKQKIAEALNTSGLQEKQDELEKELAAARELAAEESDGSVKEDDDDDEDSSESGKSEMVNPSFA.

Residues 1-54 (MASISHSSLALGGASSASASDYLRSSSNGVNGVPLKTLGRAVFTTIRRKDLAVT) constitute a chloroplast transit peptide. The CoA carboxyltransferase C-terminal domain occupies 132-385 (LENKYRQALK…KIAINENMNE (254 aa)). Coiled-coil stretches lie at residues 426 to 504 (EAVF…ASSE) and 631 to 744 (KQNQ…SDGS). The segment at 718–769 (GLQEKQDELEKELAAARELAAEESDGSVKEDDDDDEDSSESGKSEMVNPSFA) is disordered. Positions 721-732 (EKQDELEKELAA) are enriched in basic and acidic residues. Positions 738–756 (AEESDGSVKEDDDDDEDSS) are enriched in acidic residues. Ser741 is subject to Phosphoserine.

It belongs to the AccA family. As to quaternary structure, acetyl-CoA carboxylase is a heterohexamer composed of biotin carboxyl carrier protein, biotin carboxylase and two subunits each of ACCase subunit alpha and ACCase plastid-coded subunit beta (accD). Accumulates in fatty acids synthesizing tissues such as embryos, expanding leaves, flower buds, flowers, and developing siliques.

It localises to the plastid. It is found in the chloroplast inner membrane. The catalysed reaction is N(6)-carboxybiotinyl-L-lysyl-[protein] + acetyl-CoA = N(6)-biotinyl-L-lysyl-[protein] + malonyl-CoA. Its pathway is lipid metabolism; malonyl-CoA biosynthesis; malonyl-CoA from acetyl-CoA: step 1/1. Its function is as follows. Component of the acetyl coenzyme A carboxylase (ACC) complex. First, biotin carboxylase catalyzes the carboxylation of biotin on its carrier protein (BCCP) and then the CO(2) group is transferred by the carboxyltransferase to acetyl-CoA to form malonyl-CoA. The polypeptide is Acetyl-coenzyme A carboxylase carboxyl transferase subunit alpha, chloroplastic (CAC3) (Arabidopsis thaliana (Mouse-ear cress)).